The following is a 414-amino-acid chain: Esterase FrsA (414 aa).

This sequence belongs to the FrsA family.

It catalyses the reaction a carboxylic ester + H2O = an alcohol + a carboxylate + H(+). Catalyzes the hydrolysis of esters. The chain is Esterase FrsA from Escherichia coli O139:H28 (strain E24377A / ETEC).